The following is a 928-amino-acid chain: BCAS3 microtubule associated cell migration factor (928 aa).

Residue M1 is modified to N-acetylmethionine. The WD repeat unit spans residues 69–114 (DLNDTSRNLEFHEIHSTGNEPPLLIMIGYSDGMQVWSIPISGEAQE). Residue K215 forms a Glycyl lysine isopeptide (Lys-Gly) (interchain with G-Cter in SUMO1); alternate linkage. Residue K215 forms a Glycyl lysine isopeptide (Lys-Gly) (interchain with G-Cter in SUMO2); alternate linkage. 2 required for recruitment to preautophagosomal structure in response to mitophagy regions span residues 254–312 (RGGA…SRRS) and 437–560 (YGGQ…IKAP). Residues S461, S480, and S488 each carry the phosphoserine modification. Disordered stretches follow at residues 472-515 (TSKQ…PGNP) and 755-777 (TTVISSSSSVLQSHGPSDTPQPL). 3 stretches are compositionally biased toward low complexity: residues 480–494 (SPVPGLSSSPSGSPL), 505–514 (NNFTNNNPGN), and 755–771 (TTVISSSSSVLQSHGPS). Phosphoserine is present on residues S838, S886, and S898. The interval 868–928 (ESPSRDVVGS…PLSLFPTGFP (61 aa)) is disordered. The span at 887-901 (IETLSNSSGSTSGSI) shows a compositional bias: low complexity.

It belongs to the BCAS3 family. In terms of assembly, interacts with histone H3, ESR1, KAT2B and PELP1; the interactions occur in a estrogen-dependent manner. Interacts with beta-tubulin and VIM. Interacts (via C-terminal) with PHAF1; the interaction is requrired for the association with the phagophore. In terms of tissue distribution, expressed in stomach, liver, lung, kidney, prostate, testis, thyroid gland, adrenal gland, brain, heart, skeletal muscle, colon, spleen, small intestine, placenta, blood leukocyte and mammary epithelial cells. Expressed in undifferentiated ES cells. Expressed in blood islands and nascent blood vessels derived from differentiated ES cells into embryoid bodies (BD). Expressed in endothelial cells. Not detected in brain. Expressed in brain tumors (at protein level). Expressed in brain. Highly expressed in breast cancers and in glioma cell lines.

The protein localises to the nucleus. Its subcellular location is the cytoplasm. It is found in the cytoskeleton. It localises to the preautophagosomal structure. Functionally, plays a role in angiogenesis. Participates in the regulation of cell polarity and directional endothelial cell migration by mediating both the activation and recruitment of CDC42 and the reorganization of the actin cytoskeleton at the cell leading edge. Promotes filipodia formation. Functions synergistically with PELP1 as a transcriptional coactivator of estrogen receptor-responsive genes. Stimulates histone acetyltransferase activity. Binds to chromatin. Plays a regulatory role in autophagic activity. In complex with PHAF1, associates with the preautophagosomal structure during both non-selective and selective autophagy. Probably binds phosphatidylinositol 3-phosphate (PtdIns3P) which would mediate the recruitment preautophagosomal structures. In Homo sapiens (Human), this protein is BCAS3 microtubule associated cell migration factor.